The following is a 2089-amino-acid chain: Non-reducing polyketide synthase PKS16 (2089 aa).

The N-terminal acylcarrier protein transacylase (SAT) domain (SAT) stretch occupies residues 8–243; it reads VLFGDQTVDP…IKLPITAAFH (236 aa). Positions 342–364 are disordered; sequence AGIEVSRSTEMQPRQEQRTKPRS. Residues 354–364 are compositionally biased toward basic and acidic residues; the sequence is PRQEQRTKPRS. Positions 364 to 793 constitute a Ketosynthase family 3 (KS3) domain; it reads SSDIAIIGYA…GGNTSLLIED (430 aa). Catalysis depends on for beta-ketoacyl synthase activity residues C536, H671, and H710. The segment at 891 to 1214 is malonyl-CoA:ACP transacylase (MAT) domain; it reads VFLFTGQGSQ…SIANAYNSGV (324 aa). Residues 1273–1586 are product template (PT) domain; the sequence is TTCLQVIENE…KRTTLQSLLG (314 aa). The N-terminal hotdog fold stretch occupies residues 1276–1408; it reads LQVIENETFT…CTVMYGDGHQ (133 aa). Residues 1276-1582 enclose the PKS/mFAS DH domain; it reads LQVIENETFT…FQQMKRTTLQ (307 aa). Residue H1309 is the Proton acceptor; for dehydratase activity of the active site. The segment at 1435-1582 is C-terminal hotdog fold; sequence IHRMLKEMIY…FQQMKRTTLQ (148 aa). D1495 acts as the Proton donor; for dehydratase activity in catalysis. Residues 1617–1694 form the Carrier 1 domain; it reads QSPVAGFSKV…ELRAFFLDKM (78 aa). O-(pantetheine 4'-phosphoryl)serine is present on S1654. The disordered stretch occupies residues 1697-1730; sequence PQATANDDDSDDSSDDEGPGFSRSQSNSTISTPE. The segment covering 1702–1714 has biased composition (acidic residues); it reads NDDDSDDSSDDEG. Residues 1718 to 1728 show a composition bias toward polar residues; it reads SRSQSNSTIST. In terms of domain architecture, Carrier 2 spans 1729-1806; the sequence is PEEPDVVNVL…DVQKALGAAP (78 aa). At S1766 the chain carries O-(pantetheine 4'-phosphoryl)serine. The segment at 1848–2083 is thioesterase (TE) domain; sequence LFLLPDGAGS…VVGGNHFSIM (236 aa).

Its pathway is secondary metabolite biosynthesis. In terms of biological role, non-reducing polyketide synthase; part of the gene cluster that mediates the biosynthesis of orcinol depsidone grayanic acid (GRA), the only major secondary metabolite known in C.grayi. The first step consists in the ring and depside synthesis by PKS16 leading to 4-O-demethylsphaerophorin, involving different orcinol-like rings, one with acetyl CoA and the other with octanoyl CoA as the starter. Further depsidone formation by the GRA cluster-specific cytochrome P450 leads to 4-O-demethylgrayanic acid. Finally, the cluster specific O-methyltransferase probably converts the 4-O-demethylgrayanic acid into grayanic acid. The polypeptide is Non-reducing polyketide synthase PKS16 (Cladonia grayi (Gray's cup lichen)).